Here is a 147-residue protein sequence, read N- to C-terminus: Adenylylsulfatase HINT1 (147 aa).

The HIT domain occupies 37 to 147 (IFDKIISKEI…GGRQMNWPPG (111 aa)). Positions 131–135 (HIHVH) match the Histidine triad motif motif. The active-site Tele-AMP-histidine intermediate is the His-133. Position 135 (His-135) interacts with substrate.

It is found in the peroxisome. It localises to the plastid. Its subcellular location is the chloroplast. It carries out the reaction adenosine 5'-phosphosulfate + H2O = sulfate + AMP + 2 H(+). In terms of biological role, possesses adenylylsulfatase activity in vitro. The chain is Adenylylsulfatase HINT1 from Arabidopsis thaliana (Mouse-ear cress).